The following is a 314-amino-acid chain: Cathepsin L 2 (314 aa).

Residues 1–24 form the signal peptide; the sequence is MMLLGASLYLNNTQEVSDEIDTAN. The propeptide at 25–109 is activation peptide; sequence LYANWKMKYN…NASNANFQYK (85 aa). Cystine bridges form between C132–C175, C166–C207, and C259–C302. Residue C135 is part of the active site. Catalysis depends on residues H265 and N282.

Belongs to the peptidase C1 family.

The protein resides in the secreted. It carries out the reaction Specificity close to that of papain. As compared to cathepsin B, cathepsin L exhibits higher activity toward protein substrates, but has little activity on Z-Arg-Arg-NHMec, and no peptidyl-dipeptidase activity.. In terms of biological role, may be involved in extracellular digestion. The protein is Cathepsin L 2 of Paramecium tetraurelia.